A 370-amino-acid chain; its full sequence is F-box protein At3g20690 (370 aa).

An F-box domain is found at 1–45 (MMMSDLPHDLVEEILSRLPLISLKAMRSTCKTWNVLSKHRSFANK).

This chain is F-box protein At3g20690, found in Arabidopsis thaliana (Mouse-ear cress).